The following is a 246-amino-acid chain: uncharacterized protein (246 aa).

Position 194 is a phosphoserine (S194).

This is an uncharacterized protein from Schizosaccharomyces pombe (strain 972 / ATCC 24843) (Fission yeast).